A 206-amino-acid chain; its full sequence is Small ribosomal subunit protein uS4 (206 aa).

An S4 RNA-binding domain is found at Ser-96 to Asn-157.

It belongs to the universal ribosomal protein uS4 family. In terms of assembly, part of the 30S ribosomal subunit. Contacts protein S5. The interaction surface between S4 and S5 is involved in control of translational fidelity.

One of the primary rRNA binding proteins, it binds directly to 16S rRNA where it nucleates assembly of the body of the 30S subunit. In terms of biological role, with S5 and S12 plays an important role in translational accuracy. The protein is Small ribosomal subunit protein uS4 of Chromohalobacter salexigens (strain ATCC BAA-138 / DSM 3043 / CIP 106854 / NCIMB 13768 / 1H11).